A 555-amino-acid chain; its full sequence is Glucose-6-phosphate isomerase (555 aa).

Glutamate 365 serves as the catalytic Proton donor. Catalysis depends on residues histidine 396 and lysine 522.

This sequence belongs to the GPI family.

It localises to the cytoplasm. The enzyme catalyses alpha-D-glucose 6-phosphate = beta-D-fructose 6-phosphate. Its pathway is carbohydrate biosynthesis; gluconeogenesis. It functions in the pathway carbohydrate degradation; glycolysis; D-glyceraldehyde 3-phosphate and glycerone phosphate from D-glucose: step 2/4. Catalyzes the reversible isomerization of glucose-6-phosphate to fructose-6-phosphate. The sequence is that of Glucose-6-phosphate isomerase from Psychrobacter arcticus (strain DSM 17307 / VKM B-2377 / 273-4).